Consider the following 432-residue polypeptide: Putative transferase At1g60990, chloroplastic (432 aa).

A chloroplast-targeting transit peptide spans 1–57 (MNLLQSCKDMAMMMRIDSVSHITNTALLPCLYNGTVLRRRSLSLRKCGFRERKFQLR).

This sequence belongs to the GcvT family. In terms of tissue distribution, expressed in young leaves (at protein level).

It localises to the plastid. The protein resides in the chloroplast. Folate-dependent protein involved in Fe/S cluster biogenesis. Functionally complements an E.coli mutant defective in ygfZ. In Arabidopsis thaliana (Mouse-ear cress), this protein is Putative transferase At1g60990, chloroplastic.